Here is a 230-residue protein sequence, read N- to C-terminus: MFIKNLSKNIIDFPKPEKALKDPNGLLASGGDLSPERLLVAYQNGIFPWFNEGEPILWWSPDPRAVLLKCHVSRSMKRFIRPGRCPYHFSLNCAFSDVITTCATKRSGCTWISSDIVKAYCQLHRLGRAHSVEVWLKDKLVGGLYGISVGAMFCGESMFSIADNASKSALIIFEHYFTQKGGKWIDCQVLNAHTACLGAEQIPRNDFLSLLDQAQRVSLPKGVWSPQSLG.

The protein belongs to the L/F-transferase family.

The protein resides in the cytoplasm. It catalyses the reaction N-terminal L-lysyl-[protein] + L-leucyl-tRNA(Leu) = N-terminal L-leucyl-L-lysyl-[protein] + tRNA(Leu) + H(+). It carries out the reaction N-terminal L-arginyl-[protein] + L-leucyl-tRNA(Leu) = N-terminal L-leucyl-L-arginyl-[protein] + tRNA(Leu) + H(+). The catalysed reaction is L-phenylalanyl-tRNA(Phe) + an N-terminal L-alpha-aminoacyl-[protein] = an N-terminal L-phenylalanyl-L-alpha-aminoacyl-[protein] + tRNA(Phe). Functionally, functions in the N-end rule pathway of protein degradation where it conjugates Leu, Phe and, less efficiently, Met from aminoacyl-tRNAs to the N-termini of proteins containing an N-terminal arginine or lysine. The sequence is that of Leucyl/phenylalanyl-tRNA--protein transferase from Hamiltonella defensa subsp. Acyrthosiphon pisum (strain 5AT).